A 644-amino-acid chain; its full sequence is Chaperone protein DnaK (644 aa).

Phosphothreonine; by autocatalysis is present on Thr-199. The segment at Lys-605 to Lys-644 is disordered. Positions Glu-609–Thr-623 are enriched in polar residues. Over residues Gly-629–Lys-644 the composition is skewed to acidic residues.

Belongs to the heat shock protein 70 family.

Functionally, acts as a chaperone. This chain is Chaperone protein DnaK, found in Legionella pneumophila subsp. pneumophila (strain Philadelphia 1 / ATCC 33152 / DSM 7513).